The following is a 271-amino-acid chain: Short chain dehydrogenase asqE (271 aa).

NADP(+) contacts are provided by Ile22, Asp70, and Asn99. Active-site proton donor residues include Ser152 and Ser153. Tyr167, Lys171, and Thr203 together coordinate NADP(+). Tyr167 (proton acceptor) is an active-site residue. Lys171 (lowers pKa of active site Tyr) is an active-site residue.

The protein belongs to the short-chain dehydrogenases/reductases (SDR) family.

It catalyses the reaction a primary alcohol + NAD(+) = an aldehyde + NADH + H(+). The catalysed reaction is a secondary alcohol + NAD(+) = a ketone + NADH + H(+). Its pathway is secondary metabolite biosynthesis. It functions in the pathway alkaloid biosynthesis. The protein operates within mycotoxin biosynthesis. Short chain dehydrogenase; part of the gene cluster that mediates the biosynthesis of the aspoquinolone mycotoxins. The role of asqE within the aspoquinolone pathway has still to be determined. The first step of the pathway is catalyzed by the nonribosomal peptide synthetase asqK that condenses anthranilic acid and O-methyl-L-tyrosine to produce 4'-methoxycyclopeptin. 4'-methoxycyclopeptin is then converted to 4'-methoxydehydrocyclopeptin by the ketoglutarate-dependent dioxygenase asqJ. AsqJ also converts its first product 4'-methoxydehydrocyclopeptin to 4'-methoxycyclopenin. The following conversion of 4'-methoxycyclopenin into 4'-methoxyviridicatin is catalyzed by the cyclopenase asqI. 4'-methoxyviridicatin is the precursor of quinolone natural products, and is further converted to quinolinone B. The prenyltransferase asqH1 then catalyzes the canonical Friedel-Crafts alkylation of quinolinone B with dimethylallyl cation to yield dimethylallyl quinolone, which is subjected to FAD-dependent dehydrogenation by the FAD-linked oxidoreductase asqF to yield conjugated aryl diene. The delta(3') double bond then serves as the site of the second alkylation with DMAPP catalyzed by the prenyltransferase asqH2 to yield a carbenium ion intermediate, which can be attacked by H(2)O to yield a styrenyl quinolone containing a C3'-hydroxyprenyl chain. The FAD-dependent monooxygenase asqG performs epoxidation of the terminal C7'-C8' olefin. Finally, after dehydratation of the epoxide at C3 by asqC, the quinolone epoxide rearrangement protein asqO catalyzes an enzymatic 3-exo-tet cyclization to yield the cyclopropyl-THF ring system in aspoquinolone. The chain is Short chain dehydrogenase asqE from Emericella nidulans (strain FGSC A4 / ATCC 38163 / CBS 112.46 / NRRL 194 / M139) (Aspergillus nidulans).